The primary structure comprises 272 residues: Putative phosphoenolpyruvate synthase regulatory protein (272 aa).

152-159 (GVSRCGKT) provides a ligand contact to ADP.

This sequence belongs to the pyruvate, phosphate/water dikinase regulatory protein family. PSRP subfamily.

The catalysed reaction is [pyruvate, water dikinase] + ADP = [pyruvate, water dikinase]-phosphate + AMP + H(+). The enzyme catalyses [pyruvate, water dikinase]-phosphate + phosphate + H(+) = [pyruvate, water dikinase] + diphosphate. Functionally, bifunctional serine/threonine kinase and phosphorylase involved in the regulation of the phosphoenolpyruvate synthase (PEPS) by catalyzing its phosphorylation/dephosphorylation. This chain is Putative phosphoenolpyruvate synthase regulatory protein, found in Pseudomonas putida (strain GB-1).